We begin with the raw amino-acid sequence, 247 residues long: Neurotrophic factor BDNF precursor form (247 aa).

An N-terminal signal peptide occupies residues 1–18 (MTILFLTMVISYFGCMKA). Residues 19–128 (APMKEANVRG…AANMSMRVRR (110 aa)) constitute a propeptide that is removed on maturation. N-linked (GlcNAc...) asparagine glycosylation occurs at asparagine 121. Intrachain disulfides connect cysteine 141-cysteine 208, cysteine 186-cysteine 237, and cysteine 196-cysteine 239.

The protein belongs to the NGF-beta family. Monomers and homodimers. Binds to NTRK2/TRKB. Can form heterodimers with other neurotrophin family members, such as NTF3 and NTF4 (in vitro), but the physiological relevance of this is not clear. BDNF precursor form: interacts with the heterodimer formed by NGFR and SORCS2. Mature BDNF has much lower affinity for the heterodimer formed by NGFR and SORCS2. N-glycosylated and glycosulfated, contrary to mature BDNF. In terms of processing, mature BDNF is produced by proteolytic removal of the propeptide, catalyzed by a FURIN family member. In addition, the precursor form is proteolytically cleaved within the propeptide, but this is not an obligatory intermediate for the production of mature BDNF. Can be converted into mature BDNF by plasmin (PLG).

The protein localises to the secreted. In terms of biological role, important signaling molecule that activates signaling cascades downstream of NTRK2. During development, promotes the survival and differentiation of selected neuronal populations of the peripheral and central nervous systems. Participates in axonal growth, pathfinding and in the modulation of dendritic growth and morphology. Major regulator of synaptic transmission and plasticity at adult synapses in many regions of the CNS. The versatility of BDNF is emphasized by its contribution to a range of adaptive neuronal responses including long-term potentiation (LTP), long-term depression (LTD), certain forms of short-term synaptic plasticity, as well as homeostatic regulation of intrinsic neuronal excitability. Its function is as follows. Important signaling molecule that activates signaling cascades downstream of NTRK2. Activates signaling cascades via the heterodimeric receptor formed by NGFR and SORCS2. Signaling via NGFR and SORCS2 plays a role in synaptic plasticity and long-term depression (LTD). Binding to NGFR and SORCS2 promotes neuronal apoptosis. Promotes neuronal growth cone collapse. The polypeptide is Neurotrophic factor BDNF precursor form (BDNF) (Ailuropoda melanoleuca (Giant panda)).